Consider the following 147-residue polypeptide: Peptide methionine sulfoxide reductase MsrB (147 aa).

In terms of domain architecture, MsrB spans 8-131 (KEELKKILTE…NSASLKFIPK (124 aa)). C120 acts as the Nucleophile in catalysis.

It belongs to the MsrB Met sulfoxide reductase family.

The catalysed reaction is L-methionyl-[protein] + [thioredoxin]-disulfide + H2O = L-methionyl-(R)-S-oxide-[protein] + [thioredoxin]-dithiol. In Clostridium perfringens (strain SM101 / Type A), this protein is Peptide methionine sulfoxide reductase MsrB.